The primary structure comprises 161 residues: Phosphopantetheine adenylyltransferase (161 aa).

Ser9 contacts substrate. Residues 9-10 (SF) and His17 contribute to the ATP site. Lys41, Thr73, and Arg87 together coordinate substrate. Residues 88-90 (GLR), Glu98, and 123-129 (FAHISST) each bind ATP.

It belongs to the bacterial CoaD family. Homohexamer. Mg(2+) is required as a cofactor.

The protein resides in the cytoplasm. It catalyses the reaction (R)-4'-phosphopantetheine + ATP + H(+) = 3'-dephospho-CoA + diphosphate. The protein operates within cofactor biosynthesis; coenzyme A biosynthesis; CoA from (R)-pantothenate: step 4/5. Reversibly transfers an adenylyl group from ATP to 4'-phosphopantetheine, yielding dephospho-CoA (dPCoA) and pyrophosphate. The chain is Phosphopantetheine adenylyltransferase from Chloroflexus aurantiacus (strain ATCC 29366 / DSM 635 / J-10-fl).